We begin with the raw amino-acid sequence, 1770 residues long: U3 small nucleolar RNA-associated protein 10 (1770 aa).

Transmembrane regions (helical) follow at residues 499-519 (ILGL…FLSS) and 528-548 (LTFL…RLLA). An HEAT repeat occupies 1730 to 1768 (MVPIIAELLEDDNEEVESEVRGGLVRVMENVLGEPFDRY).

The protein belongs to the HEATR1/UTP10 family. As to quaternary structure, component of the ribosomal small subunit (SSU) processome.

Its subcellular location is the nucleus. The protein localises to the nucleolus. It localises to the membrane. Its function is as follows. Involved in nucleolar processing of pre-18S ribosomal RNA. Involved in ribosome biosynthesis. This chain is U3 small nucleolar RNA-associated protein 10, found in Candida glabrata (strain ATCC 2001 / BCRC 20586 / JCM 3761 / NBRC 0622 / NRRL Y-65 / CBS 138) (Yeast).